The sequence spans 305 residues: Glycine--tRNA ligase alpha subunit (305 aa).

This sequence belongs to the class-II aminoacyl-tRNA synthetase family. As to quaternary structure, tetramer of two alpha and two beta subunits.

Its subcellular location is the cytoplasm. It carries out the reaction tRNA(Gly) + glycine + ATP = glycyl-tRNA(Gly) + AMP + diphosphate. This Streptococcus pneumoniae serotype 19F (strain G54) protein is Glycine--tRNA ligase alpha subunit.